The primary structure comprises 22 residues: Brevinin-1OKa (22 aa).

Lys-22 carries the lysine amide modification.

As to expression, expressed by the skin glands.

It localises to the secreted. Functionally, antimicrobial peptide. Active against Gram-negative bacterium E.coli (MIC=12.5 uM) and against Gram-positive bacterium S.aureus (MIC=12.5 uM). This chain is Brevinin-1OKa, found in Nidirana okinavana (Kampira Falls frog).